The following is a 235-amino-acid chain: Large ribosomal subunit protein uL1 (235 aa).

The protein belongs to the universal ribosomal protein uL1 family. As to quaternary structure, part of the 50S ribosomal subunit.

Functionally, binds directly to 23S rRNA. The L1 stalk is quite mobile in the ribosome, and is involved in E site tRNA release. Protein L1 is also a translational repressor protein, it controls the translation of the L11 operon by binding to its mRNA. This chain is Large ribosomal subunit protein uL1, found in Mycolicibacterium paratuberculosis (strain ATCC BAA-968 / K-10) (Mycobacterium paratuberculosis).